Reading from the N-terminus, the 493-residue chain is Glycosyltransferase alg8 (493 aa).

4 helical membrane-spanning segments follow: residues 13-32 (GWLFYLSLLMGLAAALPTSI), 47-69 (VGIWRYSMGITHFVRGMIFLYIV), 380-402 (LTVAIIASFKYGGAFLLMYLLWI), and 422-444 (PAYPMILYYNQIVGALMKIYVFF).

It belongs to the glycosyltransferase 2 family.

It localises to the cell membrane. It functions in the pathway glycan biosynthesis; alginate biosynthesis. Functionally, possibly a processive enzyme that polymerizes GDP-mannuronic acid. This is Glycosyltransferase alg8 (alg8) from Pseudomonas syringae pv. tomato (strain ATCC BAA-871 / DC3000).